The chain runs to 191 residues: Ribosome assembly protein 3 (191 aa).

The interval 1–101 is disordered; it reads MAAAQVKNEK…NETHEKLSNI (101 aa). Low complexity predominate over residues 32–42; that stretch reads DSESSSSSSSD. Residues 50–59 show a composition bias toward basic and acidic residues; the sequence is EEPKPIKETK. Over residues 76–85 the composition is skewed to polar residues; that stretch reads VNSQEKQNSL.

The protein belongs to the RSA3 family. In terms of assembly, associates with nucleolar pre-ribosomal particles.

Its subcellular location is the nucleus. It localises to the nucleolus. Required for efficient biogenesis of the 60S ribosomal subunit. The polypeptide is Ribosome assembly protein 3 (RSA3) (Debaryomyces hansenii (strain ATCC 36239 / CBS 767 / BCRC 21394 / JCM 1990 / NBRC 0083 / IGC 2968) (Yeast)).